Consider the following 473-residue polypeptide: Adenosylhomocysteinase (473 aa).

Substrate is bound by residues T64, D139, and E199. 200-202 is a binding site for NAD(+); sequence TTT. Substrate contacts are provided by K229 and D233. Residues N234, 263–268, E286, N321, 342–344, and N387 each bind NAD(+); these read GYGDVG and IGH.

The protein belongs to the adenosylhomocysteinase family. It depends on NAD(+) as a cofactor.

Its subcellular location is the cytoplasm. The catalysed reaction is S-adenosyl-L-homocysteine + H2O = L-homocysteine + adenosine. Its pathway is amino-acid biosynthesis; L-homocysteine biosynthesis; L-homocysteine from S-adenosyl-L-homocysteine: step 1/1. In terms of biological role, may play a key role in the regulation of the intracellular concentration of adenosylhomocysteine. The sequence is that of Adenosylhomocysteinase from Paraburkholderia phytofirmans (strain DSM 17436 / LMG 22146 / PsJN) (Burkholderia phytofirmans).